Consider the following 145-residue polypeptide: MEITKEIFSLIAAVMLLLGSFIALISAIGIVKFQDVFLRSHAATKSSTLSVLLTLIGVLIYFIVNTGFFSVRLLLSLVFINLTSPVGMHLVARAAYRNGAYMYRKNDAHTHASILLSSNEQNSTEALQLRAKKREEHRKKWYQND.

3 consecutive transmembrane segments (helical) span residues 11–31 (IAAV…IGIV), 51–71 (VLLT…FFSV), and 72–92 (RLLL…HLVA).

Belongs to the CPA3 antiporters (TC 2.A.63) subunit G family. May form a heterooligomeric complex that consists of seven subunits: mnhA2, mnhB2, mnhC2, mnhD2, mnhE2, mnhF2 and mnhG2.

The protein resides in the cell membrane. The polypeptide is Putative antiporter subunit mnhG2 (mnhG2) (Staphylococcus aureus (strain JH9)).